The following is a 520-amino-acid chain: Probable DNA ligase (520 aa).

Residue glutamate 213 participates in ATP binding. Lysine 215 serves as the catalytic N6-AMP-lysine intermediate. ATP contacts are provided by arginine 220, arginine 235, glutamate 264, phenylalanine 300, arginine 372, and lysine 378.

The protein belongs to the ATP-dependent DNA ligase family. Mg(2+) is required as a cofactor.

The enzyme catalyses ATP + (deoxyribonucleotide)n-3'-hydroxyl + 5'-phospho-(deoxyribonucleotide)m = (deoxyribonucleotide)n+m + AMP + diphosphate.. DNA ligase that seals nicks in double-stranded DNA during DNA replication, DNA recombination and DNA repair. This Mycobacterium sp. (strain JLS) protein is Probable DNA ligase.